Consider the following 390-residue polypeptide: Peroxisomal sarcosine oxidase (390 aa).

An FAD-binding site is contributed by 9 to 39 (DAIVIGAGIQGCFTAYHLAKHSKSVLLLEQF). N6-acetyllysine occurs at positions 126 and 287. At C319 the chain carries S-8alpha-FAD cysteine. The Microbody targeting signal signature appears at 388–390 (AHL).

It belongs to the MSOX/MTOX family. FAD serves as cofactor. In terms of tissue distribution, kidney and liver.

It is found in the peroxisome. It catalyses the reaction sarcosine + O2 + H2O = formaldehyde + glycine + H2O2. It carries out the reaction L-pipecolate + O2 = L-1-piperideine-6-carboxylate + H2O2 + H(+). Functionally, metabolizes sarcosine, L-pipecolic acid and L-proline. The protein is Peroxisomal sarcosine oxidase (Pipox) of Mus musculus (Mouse).